A 502-amino-acid chain; its full sequence is ATP synthase subunit alpha (502 aa).

An ATP-binding site is contributed by 169–176 (GDRQTGKT).

It belongs to the ATPase alpha/beta chains family. F-type ATPases have 2 components, CF(1) - the catalytic core - and CF(0) - the membrane proton channel. CF(1) has five subunits: alpha(3), beta(3), gamma(1), delta(1), epsilon(1). CF(0) has three main subunits: a(1), b(2) and c(9-12). The alpha and beta chains form an alternating ring which encloses part of the gamma chain. CF(1) is attached to CF(0) by a central stalk formed by the gamma and epsilon chains, while a peripheral stalk is formed by the delta and b chains.

Its subcellular location is the cell inner membrane. It carries out the reaction ATP + H2O + 4 H(+)(in) = ADP + phosphate + 5 H(+)(out). Its function is as follows. Produces ATP from ADP in the presence of a proton gradient across the membrane. The alpha chain is a regulatory subunit. This chain is ATP synthase subunit alpha, found in Oleidesulfovibrio alaskensis (strain ATCC BAA-1058 / DSM 17464 / G20) (Desulfovibrio alaskensis).